The following is a 238-amino-acid chain: tRNA (guanine-N(1)-)-methyltransferase (238 aa).

Residues Gly-110 and 129-134 (LGDFIL) each bind S-adenosyl-L-methionine.

Belongs to the RNA methyltransferase TrmD family. Homodimer.

Its subcellular location is the cytoplasm. The catalysed reaction is guanosine(37) in tRNA + S-adenosyl-L-methionine = N(1)-methylguanosine(37) in tRNA + S-adenosyl-L-homocysteine + H(+). Its function is as follows. Specifically methylates guanosine-37 in various tRNAs. The sequence is that of tRNA (guanine-N(1)-)-methyltransferase from Clostridium botulinum (strain Eklund 17B / Type B).